Reading from the N-terminus, the 350-residue chain is S-adenosylmethionine:tRNA ribosyltransferase-isomerase (350 aa).

This sequence belongs to the QueA family. As to quaternary structure, monomer.

It localises to the cytoplasm. The enzyme catalyses 7-aminomethyl-7-carbaguanosine(34) in tRNA + S-adenosyl-L-methionine = epoxyqueuosine(34) in tRNA + adenine + L-methionine + 2 H(+). Its pathway is tRNA modification; tRNA-queuosine biosynthesis. Transfers and isomerizes the ribose moiety from AdoMet to the 7-aminomethyl group of 7-deazaguanine (preQ1-tRNA) to give epoxyqueuosine (oQ-tRNA). In Bacillus thuringiensis subsp. konkukian (strain 97-27), this protein is S-adenosylmethionine:tRNA ribosyltransferase-isomerase.